The primary structure comprises 401 residues: MTQMLTRPDVDLVNGMFYADGGAREAYRWMRANEPVFRDRNGLAAATTYQAVLDAERNPELFSSTGGIRPDQPGMPYMIDMDDPQHLLRRKLVNAGFTRKRVMDKVDSIGRLCDTLIDAVCERGECDFVRDIAAPLPMAVIGDMLGVLPTERDMLLKWSDDLVCGLSSHVDEAAIQKLMDTFAAYTEFTKDVITKRRAEPTDDLFSVLVNSEVEGQRMSDDEIVFETLLILIGGDETTRHTLSGGTEQLLRHRDQWDALVADVDLLPGAIEEMLRWTSPVKNMCRTLTADTVFHGTELRAGEKIMLMFESANFDESVFGDPDNFRIDRNPNSHVAFGFGTHFCLGNQLARLELRLMTERVLRRLPDLRLADDAPVPLRPANFVSGPESMPVVFTPSAPVLA.

Cys343 contacts heme.

This sequence belongs to the cytochrome P450 family. Requires heme as cofactor.

The catalysed reaction is cholest-4-en-3-one + 6 reduced [2Fe-2S]-[ferredoxin] + 3 O2 + 5 H(+) = (25R)-3-oxocholest-4-en-26-oate + 6 oxidized [2Fe-2S]-[ferredoxin] + 4 H2O. It participates in steroid metabolism; cholesterol degradation. In terms of biological role, involved in the utilization of cholesterol as the sole carbon and energy source by degrading the side chain. Primarily catalyzes the sequential oxidation of the terminal methyl of cholest-4-en-3-one into (25R)-26-hydroxycholest-4-en-3-one (alcohol), (25R)-26-oxocholest-4-en-3-one (aldehyde), to finally yield the carboxylic acid (25R)-3-oxocholest-4-en-26-oate. Also able to sequentially oxidize cholesterol itself, not only cholest-4-en-3-one. The chain is Steroid C26-monooxygenase from Mycolicibacterium smegmatis (strain ATCC 700084 / mc(2)155) (Mycobacterium smegmatis).